We begin with the raw amino-acid sequence, 337 residues long: F420-dependent glucose-6-phosphate dehydrogenase (337 aa).

Asp44 is a coenzyme F420-(gamma-Glu)n binding site. His45 (proton donor) is an active-site residue. Residues Thr81 and 112–113 (TG) contribute to the coenzyme F420-(gamma-Glu)n site. Glu114 serves as the catalytic Proton acceptor. Coenzyme F420-(gamma-Glu)n-binding positions include Asn117, 180–181 (GG), and 183–184 (GV). Residues Thr198, Lys201, Lys262, and Arg286 each contribute to the substrate site.

This sequence belongs to the F420-dependent glucose-6-phosphate dehydrogenase family. In terms of assembly, homodimer.

The catalysed reaction is oxidized coenzyme F420-(gamma-L-Glu)(n) + D-glucose 6-phosphate + H(+) = 6-phospho-D-glucono-1,5-lactone + reduced coenzyme F420-(gamma-L-Glu)(n). Its function is as follows. Catalyzes the coenzyme F420-dependent oxidation of glucose 6-phosphate (G6P) to 6-phosphogluconolactone. The protein is F420-dependent glucose-6-phosphate dehydrogenase of Kineococcus radiotolerans (strain ATCC BAA-149 / DSM 14245 / SRS30216).